Reading from the N-terminus, the 216-residue chain is Imidazole glycerol phosphate synthase subunit HisH (216 aa).

The Glutamine amidotransferase type-1 domain maps to 2–216 (RVAIIDYGSG…LISNFLRWKP (215 aa)). The active-site Nucleophile is the C88. Catalysis depends on residues H196 and E198.

Heterodimer of HisH and HisF.

It is found in the cytoplasm. The catalysed reaction is 5-[(5-phospho-1-deoxy-D-ribulos-1-ylimino)methylamino]-1-(5-phospho-beta-D-ribosyl)imidazole-4-carboxamide + L-glutamine = D-erythro-1-(imidazol-4-yl)glycerol 3-phosphate + 5-amino-1-(5-phospho-beta-D-ribosyl)imidazole-4-carboxamide + L-glutamate + H(+). The enzyme catalyses L-glutamine + H2O = L-glutamate + NH4(+). It functions in the pathway amino-acid biosynthesis; L-histidine biosynthesis; L-histidine from 5-phospho-alpha-D-ribose 1-diphosphate: step 5/9. Functionally, IGPS catalyzes the conversion of PRFAR and glutamine to IGP, AICAR and glutamate. The HisH subunit catalyzes the hydrolysis of glutamine to glutamate and ammonia as part of the synthesis of IGP and AICAR. The resulting ammonia molecule is channeled to the active site of HisF. This chain is Imidazole glycerol phosphate synthase subunit HisH, found in Agrobacterium fabrum (strain C58 / ATCC 33970) (Agrobacterium tumefaciens (strain C58)).